A 488-amino-acid chain; its full sequence is DNA polymerase II small subunit (488 aa).

Belongs to the DNA polymerase delta/II small subunit family. Heterodimer of a large subunit and a small subunit.

The enzyme catalyses DNA(n) + a 2'-deoxyribonucleoside 5'-triphosphate = DNA(n+1) + diphosphate. It catalyses the reaction Exonucleolytic cleavage in the 3'- to 5'-direction to yield nucleoside 5'-phosphates.. Its function is as follows. Possesses two activities: a DNA synthesis (polymerase) and an exonucleolytic activity that degrades single-stranded DNA in the 3' to 5' direction. Has a template-primer preference which is characteristic of a replicative DNA polymerase. The chain is DNA polymerase II small subunit (polB) from Thermoplasma acidophilum (strain ATCC 25905 / DSM 1728 / JCM 9062 / NBRC 15155 / AMRC-C165).